Reading from the N-terminus, the 473-residue chain is Siroheme synthase (473 aa).

Residues 1–203 (MTLFPIFADL…QQPGLAEQEL (203 aa)) form a precorrin-2 dehydrogenase /sirohydrochlorin ferrochelatase region. Residues 22–23 (AV) and 43–44 (PR) contribute to the NAD(+) site. Serine 128 bears the Phosphoserine mark. Residues 216–473 (GSVVLVGAGP…GLPGPQALAA (258 aa)) form a uroporphyrinogen-III C-methyltransferase region. Proline 225 is an S-adenosyl-L-methionine binding site. Catalysis depends on aspartate 248, which acts as the Proton acceptor. Catalysis depends on lysine 270, which acts as the Proton donor. Residues 302 to 304 (GGD), isoleucine 307, 332 to 333 (TA), methionine 384, and glycine 413 contribute to the S-adenosyl-L-methionine site.

The protein in the N-terminal section; belongs to the precorrin-2 dehydrogenase / sirohydrochlorin ferrochelatase family. In the C-terminal section; belongs to the precorrin methyltransferase family.

The enzyme catalyses uroporphyrinogen III + 2 S-adenosyl-L-methionine = precorrin-2 + 2 S-adenosyl-L-homocysteine + H(+). It carries out the reaction precorrin-2 + NAD(+) = sirohydrochlorin + NADH + 2 H(+). The catalysed reaction is siroheme + 2 H(+) = sirohydrochlorin + Fe(2+). It participates in cofactor biosynthesis; adenosylcobalamin biosynthesis; precorrin-2 from uroporphyrinogen III: step 1/1. The protein operates within cofactor biosynthesis; adenosylcobalamin biosynthesis; sirohydrochlorin from precorrin-2: step 1/1. Its pathway is porphyrin-containing compound metabolism; siroheme biosynthesis; precorrin-2 from uroporphyrinogen III: step 1/1. It functions in the pathway porphyrin-containing compound metabolism; siroheme biosynthesis; siroheme from sirohydrochlorin: step 1/1. It participates in porphyrin-containing compound metabolism; siroheme biosynthesis; sirohydrochlorin from precorrin-2: step 1/1. Functionally, multifunctional enzyme that catalyzes the SAM-dependent methylations of uroporphyrinogen III at position C-2 and C-7 to form precorrin-2 via precorrin-1. Then it catalyzes the NAD-dependent ring dehydrogenation of precorrin-2 to yield sirohydrochlorin. Finally, it catalyzes the ferrochelation of sirohydrochlorin to yield siroheme. This chain is Siroheme synthase, found in Bordetella parapertussis (strain 12822 / ATCC BAA-587 / NCTC 13253).